We begin with the raw amino-acid sequence, 108 residues long: Cytochrome c-555 (108 aa).

An N-terminal signal peptide occupies residues 1 to 22 (MSRFVSAALVGAALLVSGNAFA). Heme c contacts are provided by Cys-36, Cys-39, His-40, and Met-82.

In terms of processing, binds 1 heme c group covalently per subunit.

Its function is as follows. This basic c-type monoheme cytochrome has been found exclusively in the green photosynthetic bacteria, although its role in bacterial photosynthesis is not established. It has an unusually low redox potential compared with mitochondrial cytochrome c. It is reactive with cytochrome c oxidases but not with reductases. The polypeptide is Cytochrome c-555 (Chlorobaculum tepidum (strain ATCC 49652 / DSM 12025 / NBRC 103806 / TLS) (Chlorobium tepidum)).